The primary structure comprises 253 residues: Mitochondrial inner membrane protease ATP23 (253 aa).

The segment at 1–23 is disordered; it reads MSKNADLEAIPAAEEIKKPNPPK. Basic and acidic residues predominate over residues 14-23; the sequence is EEIKKPNPPK. An a divalent metal cation-binding site is contributed by His-152. The active site involves Glu-153. Residue His-156 coordinates a divalent metal cation.

The protein belongs to the peptidase M76 family.

Its subcellular location is the mitochondrion inner membrane. In terms of biological role, has a dual role in the assembly of mitochondrial ATPase. Acts as a protease that removes N-terminal residues of mitochondrial ATPase CF(0) subunit 6 at the intermembrane space side. Also involved in the correct assembly of the membrane-embedded ATPase CF(0) particle, probably mediating association of subunit 6 with the subunit 9 ring. The polypeptide is Mitochondrial inner membrane protease ATP23 (ATP23) (Vanderwaltozyma polyspora (strain ATCC 22028 / DSM 70294 / BCRC 21397 / CBS 2163 / NBRC 10782 / NRRL Y-8283 / UCD 57-17) (Kluyveromyces polysporus)).